The following is a 998-amino-acid chain: Ephrin type-B receptor 3 (998 aa).

The N-terminal stretch at 1-33 (MARARPPPPPSPPPGLLPLLPPLLLLPLLLLPA) is a signal peptide. Residues 34–559 (GCRALEETLM…AQQLQEQLPL (526 aa)) are Extracellular-facing. Residues 39–217 (EETLMDTKWV…FYKKCASTTA (179 aa)) form the Eph LBD domain. The cysteines at positions 81 and 199 are disulfide-linked. 2 consecutive Fibronectin type-III domains span residues 339 to 451 (VPSP…TNQA) and 452 to 545 (APSE…TTSE). Residues Asn-351 and Asn-445 are each glycosylated (N-linked (GlcNAc...) asparagine). Residues 560-580 (IVGSATAGLVFVVAVVVIAIV) traverse the membrane as a helical segment. The Cytoplasmic portion of the chain corresponds to 581 to 998 (CLRKQRHGSD…QMNQTLPVQV (418 aa)). Tyr-614 carries the post-translational modification Phosphotyrosine; by autocatalysis. The Protein kinase domain maps to 633–896 (VKIEEVIGAG…QIVNTLDKLI (264 aa)). Residues 639 to 647 (IGAGEFGEV) and Lys-665 contribute to the ATP site. The active-site Proton acceptor is the Asp-758. The SAM domain occupies 925–989 (TTFTTVGDWL…LSSIQDMRLQ (65 aa)). Residues 996 to 998 (VQV) carry the PDZ-binding motif.

The protein belongs to the protein kinase superfamily. Tyr protein kinase family. Ephrin receptor subfamily. In terms of assembly, heterotetramer upon binding of the ligand. The heterotetramer is composed of an ephrin dimer and a receptor dimer. Oligomerization is probably required to induce biological responses. In terms of processing, phosphorylated. Autophosphorylates upon ligand-binding. Autophosphorylation on Tyr-614 is required for interaction with SH2 domain-containing proteins. Ubiquitinated by RNF186, mainly through 'Lys-48' and 'Lys-63'-linked polyubiquitin chains. In terms of tissue distribution, ubiquitous.

It localises to the cell membrane. The protein localises to the cell projection. It is found in the dendrite. The enzyme catalyses L-tyrosyl-[protein] + ATP = O-phospho-L-tyrosyl-[protein] + ADP + H(+). Functionally, receptor tyrosine kinase which binds promiscuously transmembrane ephrin-B family ligands residing on adjacent cells, leading to contact-dependent bidirectional signaling into neighboring cells. The signaling pathway downstream of the receptor is referred to as forward signaling while the signaling pathway downstream of the ephrin ligand is referred to as reverse signaling. Generally has an overlapping and redundant function with EPHB2. Like EPHB2, functions in axon guidance during development regulating for instance the neurons forming the corpus callosum and the anterior commissure, 2 major interhemispheric connections between the temporal lobes of the cerebral cortex. In addition to its role in axon guidance also plays an important redundant role with other ephrin-B receptors in development and maturation of dendritic spines and the formation of excitatory synapses. Controls other aspects of development through regulation of cell migration and positioning. This includes angiogenesis, palate development and thymic epithelium development for instance. Forward and reverse signaling through the EFNB2/EPHB3 complex also regulate migration and adhesion of cells that tubularize the urethra and septate the cloaca. Finally, plays an important role in intestinal epithelium differentiation segregating progenitor from differentiated cells in the crypt. In Homo sapiens (Human), this protein is Ephrin type-B receptor 3 (EPHB3).